The following is a 199-amino-acid chain: Adenine phosphoribosyltransferase (199 aa).

The protein belongs to the purine/pyrimidine phosphoribosyltransferase family. Homodimer.

It localises to the cytoplasm. The enzyme catalyses AMP + diphosphate = 5-phospho-alpha-D-ribose 1-diphosphate + adenine. The protein operates within purine metabolism; AMP biosynthesis via salvage pathway; AMP from adenine: step 1/1. In terms of biological role, catalyzes a salvage reaction resulting in the formation of AMP, that is energically less costly than de novo synthesis. The sequence is that of Adenine phosphoribosyltransferase from Rhodopseudomonas palustris (strain BisB18).